We begin with the raw amino-acid sequence, 523 residues long: Vanin-like protein 3 (523 aa).

The first 19 residues, 1-19, serve as a signal peptide directing secretion; it reads MAVFLRRFLWLISFTLVLT. The CN hydrolase domain occupies 29–298; the sequence is YIAGVVEYRP…RKLLLAKVPL (270 aa). N-linked (GlcNAc...) asparagine glycosylation occurs at asparagine 64. Residue glutamate 74 is the Proton acceptor of the active site. Lysine 167 serves as the catalytic Proton donor. 2 N-linked (GlcNAc...) asparagine glycosylation sites follow: asparagine 177 and asparagine 192. Cysteine 200 serves as the catalytic Nucleophile. N-linked (GlcNAc...) asparagine glycans are attached at residues asparagine 330 and asparagine 468. Asparagine 498 is lipidated: GPI-anchor amidated asparagine. Positions 499–523 are cleaved as a propeptide — removed in mature form; that stretch reads GGAGRLGTLLFLLITPLIMMHLFRE.

This sequence belongs to the carbon-nitrogen hydrolase superfamily. BTD/VNN family. Expressed in third instar larvae.

The protein resides in the cell membrane. In Drosophila melanogaster (Fruit fly), this protein is Vanin-like protein 3.